A 315-amino-acid chain; its full sequence is Ribosomal protein L11 methyltransferase (315 aa).

T163, G185, D207, and N249 together coordinate S-adenosyl-L-methionine.

Belongs to the methyltransferase superfamily. PrmA family.

The protein localises to the cytoplasm. It catalyses the reaction L-lysyl-[protein] + 3 S-adenosyl-L-methionine = N(6),N(6),N(6)-trimethyl-L-lysyl-[protein] + 3 S-adenosyl-L-homocysteine + 3 H(+). In terms of biological role, methylates ribosomal protein L11. In Lactobacillus helveticus (strain DPC 4571), this protein is Ribosomal protein L11 methyltransferase.